A 220-amino-acid chain; its full sequence is GTP cyclohydrolase 1 (220 aa).

Residues cysteine 109, histidine 112, and cysteine 180 each coordinate Zn(2+).

It belongs to the GTP cyclohydrolase I family. In terms of assembly, homomer.

It catalyses the reaction GTP + H2O = 7,8-dihydroneopterin 3'-triphosphate + formate + H(+). It functions in the pathway cofactor biosynthesis; 7,8-dihydroneopterin triphosphate biosynthesis; 7,8-dihydroneopterin triphosphate from GTP: step 1/1. This Pectobacterium carotovorum subsp. carotovorum (strain PC1) protein is GTP cyclohydrolase 1.